We begin with the raw amino-acid sequence, 443 residues long: Probable D-serine dehydratase (443 aa).

The residue at position 106 (lysine 106) is an N6-(pyridoxal phosphate)lysine.

The protein belongs to the serine/threonine dehydratase family. DsdA subfamily. It depends on pyridoxal 5'-phosphate as a cofactor.

The enzyme catalyses D-serine = pyruvate + NH4(+). The protein is Probable D-serine dehydratase of Cupriavidus pinatubonensis (strain JMP 134 / LMG 1197) (Cupriavidus necator (strain JMP 134)).